The following is a 139-amino-acid chain: uncharacterized protein (139 aa).

Polar residues predominate over residues 1–11; it reads MALSMSLSSDI. Disordered regions lie at residues 1-80 and 100-139; these read MALS…AAAA and ASSP…LARS. Positions 63-80 are enriched in low complexity; sequence GAGSASAGGSRLAAAAAA.

This is an uncharacterized protein from Homo sapiens (Human).